The chain runs to 89 residues: DNA-directed RNA polymerase subunit omega (89 aa).

This sequence belongs to the RNA polymerase subunit omega family. In terms of assembly, the RNAP catalytic core consists of 2 alpha, 1 beta, 1 beta' and 1 omega subunit. When a sigma factor is associated with the core the holoenzyme is formed, which can initiate transcription.

The enzyme catalyses RNA(n) + a ribonucleoside 5'-triphosphate = RNA(n+1) + diphosphate. Its function is as follows. Promotes RNA polymerase assembly. Latches the N- and C-terminal regions of the beta' subunit thereby facilitating its interaction with the beta and alpha subunits. In Pasteurella multocida (strain Pm70), this protein is DNA-directed RNA polymerase subunit omega (rpoZ).